The chain runs to 425 residues: MAAIADIIAREILDSRGNPTVEVDVTLESGAQGRAAVPSGASTGAHEAVELRDGDKSRYGGKGVLHAVSFVEGEIFEAIGGMDASEQLRIDETLIAVDGTPNKSRLGANAMLAVSLATAKAAANHQGVPLYRYLGGVYARTLPVPMMNIVNGGKHADNPIDIQEFMIQPVAAPTIADAVRVGAEIFAALKKELSAAGHNTNVGDEGGFAPGLKSAEEALSFITKACEKAGYRPGEDVTFALDCAATEFFKDGVYDLEGEGKKFDAAGMVRYLEDLAAKFPIVSIEDGLAEDDWEGWKLLTDTLGRKVQLVGDDLFVTNPDRLRHGIALGTANAILVKVNQIGTLSETLEAVETAHRAGYAAVMSHRSGETEDSTIADLAVATNCGQIKTGSLSRSDRTAKYNQLIRIEQDLDTSGRYAGRTILRG.

Gln163 lines the (2R)-2-phosphoglycerate pocket. The active-site Proton donor is the Glu205. The Mg(2+) site is built by Asp242, Glu285, and Asp312. Residues Lys337, Arg366, Ser367, and Lys388 each coordinate (2R)-2-phosphoglycerate. Lys337 (proton acceptor) is an active-site residue.

It belongs to the enolase family. Mg(2+) is required as a cofactor.

The protein localises to the cytoplasm. It is found in the secreted. Its subcellular location is the cell surface. It catalyses the reaction (2R)-2-phosphoglycerate = phosphoenolpyruvate + H2O. It functions in the pathway carbohydrate degradation; glycolysis; pyruvate from D-glyceraldehyde 3-phosphate: step 4/5. Functionally, catalyzes the reversible conversion of 2-phosphoglycerate (2-PG) into phosphoenolpyruvate (PEP). It is essential for the degradation of carbohydrates via glycolysis. This chain is Enolase, found in Granulibacter bethesdensis (strain ATCC BAA-1260 / CGDNIH1).